The primary structure comprises 110 residues: UPF0122 protein YlxM (110 aa).

It belongs to the UPF0122 family.

Its function is as follows. Might take part in the signal recognition particle (SRP) pathway. This is inferred from the conservation of its genetic proximity to ftsY/ffh. May be a regulatory protein. This is UPF0122 protein YlxM (ylxM) from Bacillus subtilis (strain 168).